The chain runs to 210 residues: Phosphoribosyl-dephospho-CoA transferase (210 aa).

Catalysis depends on residues D135 and D137.

The protein belongs to the MdcG family.

It carries out the reaction apo-[malonate decarboxylase ACP] + 2'-(5''-triphospho-alpha-D-ribosyl)-3'-dephospho-CoA = holo-[malonate decarboxylase ACP] + diphosphate. Transfers 2'-(5-triphosphoribosyl)-3'-dephosphocoenzyme-A to the apo-[acyl-carrier-protein] of the malonate decarboxylase to yield holo-[acyl-carrier-protein]. This is Phosphoribosyl-dephospho-CoA transferase from Pseudomonas aeruginosa (strain ATCC 15692 / DSM 22644 / CIP 104116 / JCM 14847 / LMG 12228 / 1C / PRS 101 / PAO1).